A 187-amino-acid polypeptide reads, in one-letter code: Ribosome-recycling factor (187 aa).

It belongs to the RRF family.

Its subcellular location is the cytoplasm. Functionally, responsible for the release of ribosomes from messenger RNA at the termination of protein biosynthesis. May increase the efficiency of translation by recycling ribosomes from one round of translation to another. This Rhodopseudomonas palustris (strain BisB5) protein is Ribosome-recycling factor.